A 510-amino-acid chain; its full sequence is Inositol-3-phosphate synthase isozyme 2 (510 aa).

It belongs to the myo-inositol 1-phosphate synthase family. The cofactor is NAD(+). In terms of tissue distribution, expressed in siliques, leaves, roots, seed endosperm, but not in embryos. Highest expression in seeds. In leaves, only expressed in hydathodes and vascular tissue.

The protein resides in the cytoplasm. It carries out the reaction D-glucose 6-phosphate = 1D-myo-inositol 3-phosphate. It functions in the pathway polyol metabolism; myo-inositol biosynthesis; myo-inositol from D-glucose 6-phosphate: step 1/2. In terms of biological role, key enzyme in myo-inositol biosynthesis pathway that catalyzes the conversion of glucose 6-phosphate to 1-myo-inositol 1-phosphate in a NAD-dependent manner. This is Inositol-3-phosphate synthase isozyme 2 (IPS2) from Arabidopsis thaliana (Mouse-ear cress).